Here is a 432-residue protein sequence, read N- to C-terminus: Asparagine--tRNA ligase (432 aa).

Belongs to the class-II aminoacyl-tRNA synthetase family. As to quaternary structure, homodimer.

The protein localises to the cytoplasm. The enzyme catalyses tRNA(Asn) + L-asparagine + ATP = L-asparaginyl-tRNA(Asn) + AMP + diphosphate + H(+). The chain is Asparagine--tRNA ligase from Limosilactobacillus reuteri (strain DSM 20016) (Lactobacillus reuteri).